The chain runs to 591 residues: Aspartate--tRNA(Asp/Asn) ligase (591 aa).

E174 provides a ligand contact to L-aspartate. The segment at 198 to 201 (QLFK) is aspartate. R220 lines the L-aspartate pocket. ATP is bound by residues 220–222 (RDE) and Q229. An L-aspartate-binding site is contributed by H450. An ATP-binding site is contributed by E483. Residue R490 coordinates L-aspartate. 535–538 (GLDR) contacts ATP.

This sequence belongs to the class-II aminoacyl-tRNA synthetase family. Type 1 subfamily. As to quaternary structure, homodimer.

It localises to the cytoplasm. It catalyses the reaction tRNA(Asx) + L-aspartate + ATP = L-aspartyl-tRNA(Asx) + AMP + diphosphate. In terms of biological role, aspartyl-tRNA synthetase with relaxed tRNA specificity since it is able to aspartylate not only its cognate tRNA(Asp) but also tRNA(Asn). Reaction proceeds in two steps: L-aspartate is first activated by ATP to form Asp-AMP and then transferred to the acceptor end of tRNA(Asp/Asn). In Pseudomonas syringae pv. syringae (strain B728a), this protein is Aspartate--tRNA(Asp/Asn) ligase.